Consider the following 4473-residue polypeptide: Plectin (4473 aa).

2 consecutive Calponin-homology (CH) domains span residues 1–74 (DGHN…LHFQ) and 87–192 (MTAK…DAMP). Residues 1 to 192 (DGHNLISLLE…YVSSLYDAMP (192 aa)) form an actin-binding region. The interval 1 to 1259 (DGHNLISLLE…SELTTLTSQY (1259 aa)) is globular 1. The Spectrin 1 repeat unit spans residues 449-508 (RYLQDLLAWVEENQRRIDSAEWGVDLPSVEAQLGSHRGMHQSIEEFRAKIERARNDESQL). Serine 509 carries the phosphoserine modification. Spectrin repeat units follow at residues 529-613 (KLLN…REDH) and 626-719 (LQTQ…AIVQ). Threonine 604 is subject to Phosphothreonine. Residues 730–787 (RGHVPLMAVCDYKQVEVTVHKGDQCQLVGPAQPSHWKVLRGPSSEAAVPSVCFLVPPP) form the SH3 domain. Residue serine 836 is modified to Phosphoserine. One copy of the Spectrin 4 repeat lies at 1104–1204 (RERVNQLLER…QKFAKQYINA (101 aa)). Serine 1224 is modified (phosphoserine). Residues 1258-2548 (QYIKFISETL…EEIAATQAAA (1291 aa)) adopt a coiled-coil conformation. The central fibrous rod domain stretch occupies residues 1260-2544 (IKFISETLRR…LAHSEEIAAT (1285 aa)). 2 disordered regions span residues 1274-1293 (ERLAEQQRAEERERLAEGEA) and 1407-1434 (RAEEAEAQKRQAQEEAERLRRQVQDESQ). At serine 1510 the chain carries Phosphoserine. An N6-acetyllysine modification is found at lysine 1514. Disordered stretches follow at residues 1529 to 1550 (VTQLREKAERRAQQQAEAERAR), 1582 to 1616 (SLAQADAEKQKEEAEREARRRGKAEEQAVRQRELA), 1881 to 1929 (AEDT…AARQ), 1950 to 1971 (LRERAEQESARQLQLAQEAAQK), and 2003 to 2098 (ERLR…KHKK). Composition is skewed to basic and acidic residues over residues 1587 to 1616 (DAEKQKEEAEREARRRGKAEEQAVRQRELA), 1881 to 1897 (AEDTMRSKEQAEQEAAR), and 1905 to 1917 (EEQRRREAEERVQ). Residues 1959–1968 (ARQLQLAQEA) show a composition bias toward low complexity. The segment covering 2003-2047 (ERLRGEAEAARRAAEEAEEAREQAEREAAQSRKQVEEAERLKQSA) has biased composition (basic and acidic residues). Residues 2048–2061 (EEQAQARAQAQAAA) show a composition bias toward low complexity. Residues 2062–2077 (EKLRKEAEQEAARRAQ) show a composition bias toward basic and acidic residues. A Phosphoserine modification is found at serine 2420. N6-acetyllysine is present on lysine 2425. The segment at 2457–2476 (REEQQRQQRQMEQEKQELVA) is disordered. A globular 2 region spans residues 2545-4473 (QAAAAKALPN…SLGGPESAVA (1929 aa)). A phosphoserine mark is found at serine 2563 and serine 2591. Plectin repeat units follow at residues 2615 to 2652 (RQYLQGRSSIAGLLLKPTDEKLSVYTALQRQLLSPGTA), 2653 to 2690 (LILLEAQAASGFLLDPVRNRRLTVNEPVKEGVVGPELH), 2691 to 2728 (HKLLSAERAVTGYKDPYTGEQISLFQAMKKDLLVRDHA), 2729 to 2766 (IRLLEAQIATGGIIDTVHSHRVPVDVAYQRGYFDEEMS), and 2770 to 2804 (ADPGDDTKGFFDPNTHENLTYLQLLERCVEDPETG). The residue at position 2675 (threonine 2675) is a Phosphothreonine. The residue at position 2822 (tyrosine 2822) is a Phosphotyrosine. 2 positions are modified to N6-acetyllysine: lysine 2842 and lysine 2880. Plectin repeat units lie at residues 2905 to 2942 (ALVPAAELLESGVISHELYQQLQRGERSVREVAEADSV), 2943 to 2980 (RRALRGASVIAGVWLEEAGQKLSIYEALKKDLLQPDVA), 2981 to 3018 (VALLEAQAGTGHIIDPATSARLTVDEAVRAGLVGPELH), 3019 to 3056 (EKLLSAEKAVTGYRDPYSGQSVSLFQALKKGLIPREQG), and 3057 to 3094 (LRLLDAQLSTGGMVDPSKSHRVPLDVAYARGYLDKETN). A Phosphotyrosine modification is found at tyrosine 3151. Lysine 3209 is subject to N6-acetyllysine. Plectin repeat units follow at residues 3274–3311 (RTLLQGSGCLAGVYLEDSKEKVTIYEAMRRGLLRPSTA), 3312–3349 (TLLLEAQAATGFLVDPVRNQRLYVHEAVKAGVVGPELH), 3350–3387 (EKLLSAEKAVTGYKDPYSGTTISLFQAMKKGLVLREHA), 3388–3425 (IRLLEAQIATGGIIDPVHSHRLPVDVAYQRGYFDEEMS), and 3429–3463 (ADPSDDTKGFFDPNTHENLTYLQLLERCVEDPETG). Threonine 3574 is subject to Phosphothreonine. Tyrosine 3579 is subject to Phosphotyrosine. Plectin repeat units lie at residues 3609-3646 (WRYLYGTGSVAGVYLPGSRQTLTIYQALKKGLLSAEVA), 3647-3684 (RLLLEAQAATGFLLDPVKGERLTVDEAVRKGLVGPELH), 3685-3722 (DRLLSAERAVTGYRDPYTEQTISLFQAMKKELIPAEEA), 3723-3760 (LRLLDAQLATGGIVDPRLGFHLPLEVAYQRGYLNKDTH), 3764-3797 (SEPSEVRSYVDPSTDERLSYTQLLKRCRRDDGSG), and 3800-3834 (LLPLSDARRLTFRGLRKQITVEELVRSQVMDEATA). At threonine 3819 the chain carries Phosphothreonine. Serine 3843 bears the Phosphoserine mark. 6 Plectin repeats span residues 3852–3889 (QKFLEGTSCIAGVFVDATKERLSVYQAMKKGIIRPGTA), 3890–3927 (FELLEAQAATGYVIDPIKGLKLTVEEAVRMGIVGPEFK), 3928–3965 (DRLLSAERAVTGYKDPYSGKLISLFQAMKKGLILKDHG), 3966–4003 (IRLLEAQIATGGIIDPEESHRLPVEVAYKRGLFDEEMN), 4007–4041 (TDPSDDTKGFFDPNTEENLTYLQLMERCITDPQTG), and 4043–4094 (RLLP…HQTY). The binding to intermediate filaments stretch occupies residues 4039–4089 (QTGLRLLPLKEKKRERKTSSKSSVRKRRVVIVDPETSKEMSVYEAYRKGLI). 8 positions are modified to phosphoserine: serine 4171, serine 4173, serine 4174, serine 4175, serine 4178, serine 4179, serine 4180, and serine 4181. At tyrosine 4182 the chain carries Phosphotyrosine. 3 positions are modified to phosphoserine: serine 4185, serine 4189, and serine 4195. 5 Plectin repeats span residues 4197-4234 (SDPTEETGPVAGILDTETLEKVSITEAMHRNLVDNITG), 4235-4272 (QRLLEAQACTGGIIDPSTGERFPVTEAVNKGLVDKIMV), 4273-4310 (DRINLAQKAFCGFEDPRTKTKMSAAQALKKGWLYYEAG), 4311-4348 (QRFLEVQYLTGGLIEPDTPGRVPLDEALQRGTVDARTA), and 4349-4386 (QKLRDVSAYSKYLTCPKTKLKISYKDALDRSMVEEGTG). Threonine 4200 is modified (phosphothreonine). Threonine 4328 is subject to Phosphothreonine; by CDK1. Serine 4396 and serine 4402 each carry phosphoserine. Over residues 4400–4460 (YYSPYSVSGS…SGYGRRYASG (61 aa)) the composition is skewed to low complexity. The interval 4400–4473 (YYSPYSVSGS…SLGGPESAVA (74 aa)) is disordered. Tyrosine 4404 is subject to Phosphotyrosine. Phosphoserine is present on residues serine 4405, serine 4407, and serine 4411. Phosphothreonine is present on threonine 4412. Residues 4414-4429 (GSRTGSRTGSRAGSRR) form a 4 X 4 AA tandem repeats of G-S-R-X region. Serine 4415 bears the Phosphoserine mark. Omega-N-methylarginine occurs at positions 4416 and 4429. Serine 4431 and serine 4464 each carry phosphoserine.

Belongs to the plakin or cytolinker family. Homodimer or homotetramer. Interacts (via actin-binding domain) with SYNE3. Interacts (via calponin-homology (CH) 1 domain) with VIM (via rod region). Interacts (via N-terminus) with DST isoform 2 (via N-terminus). Interacts with FER. Interacts with TOR1A. Interacts with ANK3. Identified in complexes that contain VIM, EZR, AHNAK, BFSP1, BFSP2, ANK2, PLEC, PRX and spectrin. Phosphorylated by CDK1; regulates dissociation from intermediate filaments during mitosis.

The protein localises to the cytoplasm. The protein resides in the cytoskeleton. It localises to the cell junction. Its subcellular location is the hemidesmosome. It is found in the cell projection. The protein localises to the podosome. In terms of biological role, interlinks intermediate filaments with microtubules and microfilaments and anchors intermediate filaments to desmosomes or hemidesmosomes. May be involved not only in the cross-linking and stabilization of cytoskeletal intermediate filaments network, but also in the regulation of their dynamics. The protein is Plectin (PLEC) of Cricetulus griseus (Chinese hamster).